Reading from the N-terminus, the 264-residue chain is Thymidylate synthase (264 aa).

Arg-21 contacts dUMP. Position 51 (His-51) interacts with (6R)-5,10-methylene-5,6,7,8-tetrahydrofolate. 126–127 (RR) is a dUMP binding site. Catalysis depends on Cys-146, which acts as the Nucleophile. Residues 166 to 169 (RSCD), Asn-177, and 207 to 209 (HLY) each bind dUMP. (6R)-5,10-methylene-5,6,7,8-tetrahydrofolate is bound at residue Asp-169. Ala-263 is a (6R)-5,10-methylene-5,6,7,8-tetrahydrofolate binding site.

This sequence belongs to the thymidylate synthase family. Bacterial-type ThyA subfamily. In terms of assembly, homodimer.

The protein resides in the cytoplasm. It carries out the reaction dUMP + (6R)-5,10-methylene-5,6,7,8-tetrahydrofolate = 7,8-dihydrofolate + dTMP. The protein operates within pyrimidine metabolism; dTTP biosynthesis. In terms of biological role, catalyzes the reductive methylation of 2'-deoxyuridine-5'-monophosphate (dUMP) to 2'-deoxythymidine-5'-monophosphate (dTMP) while utilizing 5,10-methylenetetrahydrofolate (mTHF) as the methyl donor and reductant in the reaction, yielding dihydrofolate (DHF) as a by-product. This enzymatic reaction provides an intracellular de novo source of dTMP, an essential precursor for DNA biosynthesis. The polypeptide is Thymidylate synthase (Shigella dysenteriae serotype 1 (strain Sd197)).